Reading from the N-terminus, the 740-residue chain is Rho GTPase-activating protein 92B (740 aa).

The BAR domain maps to 13–246 (ENLSRSSKSD…IQDTIQGTEK (234 aa)). Positions 49–74 (LPALSGGGGSGSGSSEEQDKRTKKNS) are disordered. In terms of domain architecture, Rho-GAP spans 251–448 (TSLKEHLTST…LLISQWDYFF (198 aa)). The tract at residues 467–740 (GKSKSNSSNE…PPPTNWKSSD (274 aa)) is disordered. Phosphoserine occurs at positions 469 and 473. A compositionally biased stretch (polar residues) spans 506 to 520 (TTNGNGIIMTTSQTS). Over residues 566–577 (PLPPPPVTPAKP) the composition is skewed to pro residues. Residue S593 is modified to Phosphoserine. A Phosphothreonine modification is found at T595. A compositionally biased stretch (polar residues) spans 643–655 (TTPTQATIDNGNG). Residues 659–672 (FKTEHFLDKLRQEN) show a composition bias toward basic and acidic residues. Polar residues predominate over residues 673–686 (GETNGTREVSSTTK). Residues 694-713 (PPATAADQNQQQAQPQVTTP) are compositionally biased toward low complexity. S715 bears the Phosphoserine mark. T721 carries the phosphothreonine modification. The span at 725 to 734 (PTVPAPPPPT) shows a compositional bias: pro residues. A phosphoserine mark is found at S738 and S739.

In terms of biological role, GTPase activator for the Rho-type GTPases by converting them to an inactive GDP-bound state. This is Rho GTPase-activating protein 92B (RhoGAP92B) from Drosophila melanogaster (Fruit fly).